Reading from the N-terminus, the 61-residue chain is Sperm protamine P1 (61 aa).

Positions 1-61 are disordered; that stretch reads MARYRHSRSR…RRYSRRRRRY (61 aa).

This sequence belongs to the protamine P1 family. Testis.

It is found in the nucleus. The protein resides in the chromosome. Its function is as follows. Protamines substitute for histones in the chromatin of sperm during the haploid phase of spermatogenesis. They compact sperm DNA into a highly condensed, stable and inactive complex. This is Sperm protamine P1 (PRM1) from Potorous longipes (Long-footed potoroo).